The following is a 521-amino-acid chain: Protein disulfide-isomerase A5 (521 aa).

Residues Met1–Ser25 form the signal peptide. 3 consecutive Thioredoxin domains span residues Phe136–Pro263, Ala274–Ser386, and Pro387–Glu508. 3 disulfides stabilise this stretch: Cys184/Cys187, Cys307/Cys310, and Cys428/Cys431. Positions Lys518–Leu521 match the Prevents secretion from ER motif.

This sequence belongs to the protein disulfide isomerase family.

The protein resides in the endoplasmic reticulum lumen. The catalysed reaction is Catalyzes the rearrangement of -S-S- bonds in proteins.. The chain is Protein disulfide-isomerase A5 (PDIA5) from Bos taurus (Bovine).